Consider the following 142-residue polypeptide: Transcription antitermination protein NusB (142 aa).

The protein belongs to the NusB family.

In terms of biological role, involved in transcription antitermination. Required for transcription of ribosomal RNA (rRNA) genes. Binds specifically to the boxA antiterminator sequence of the ribosomal RNA (rrn) operons. The protein is Transcription antitermination protein NusB of Thermotoga sp. (strain RQ2).